Reading from the N-terminus, the 345-residue chain is Biotin synthase (345 aa).

In terms of domain architecture, Radical SAM core spans 66-291 (PEVEIEGIIS…RTILRFAGGR (226 aa)). The [4Fe-4S] cluster site is built by Cys81, Cys85, and Cys88. [2Fe-2S] cluster contacts are provided by Cys124, Cys157, Cys216, and Arg286.

It belongs to the radical SAM superfamily. Biotin synthase family. In terms of assembly, homodimer. [4Fe-4S] cluster is required as a cofactor. [2Fe-2S] cluster serves as cofactor.

It catalyses the reaction (4R,5S)-dethiobiotin + (sulfur carrier)-SH + 2 reduced [2Fe-2S]-[ferredoxin] + 2 S-adenosyl-L-methionine = (sulfur carrier)-H + biotin + 2 5'-deoxyadenosine + 2 L-methionine + 2 oxidized [2Fe-2S]-[ferredoxin]. It participates in cofactor biosynthesis; biotin biosynthesis; biotin from 7,8-diaminononanoate: step 2/2. In terms of biological role, catalyzes the conversion of dethiobiotin (DTB) to biotin by the insertion of a sulfur atom into dethiobiotin via a radical-based mechanism. The protein is Biotin synthase of Mycobacterium leprae (strain Br4923).